A 320-amino-acid polypeptide reads, in one-letter code: Cytochrome f (320 aa).

Positions 1–35 are cleaved as a signal peptide; the sequence is MQTRNAFSCIKEGITRSISISVMIYIIIRAPFSNA. The heme site is built by Tyr36, Cys56, Cys59, and His60. Residues 286–306 traverse the membrane as a helical segment; the sequence is VQGLLFFLASIILAQIFLVLK.

The protein belongs to the cytochrome f family. In terms of assembly, the 4 large subunits of the cytochrome b6-f complex are cytochrome b6, subunit IV (17 kDa polypeptide, petD), cytochrome f and the Rieske protein, while the 4 small subunits are PetG, PetL, PetM and PetN. The complex functions as a dimer. The cofactor is heme.

Its subcellular location is the plastid. The protein localises to the chloroplast thylakoid membrane. Functionally, component of the cytochrome b6-f complex, which mediates electron transfer between photosystem II (PSII) and photosystem I (PSI), cyclic electron flow around PSI, and state transitions. The sequence is that of Cytochrome f from Phaseolus vulgaris (Kidney bean).